The following is a 557-amino-acid chain: 2-succinyl-5-enolpyruvyl-6-hydroxy-3-cyclohexene-1-carboxylate synthase (557 aa).

Belongs to the TPP enzyme family. MenD subfamily. In terms of assembly, homodimer. Mg(2+) serves as cofactor. The cofactor is Mn(2+). Requires thiamine diphosphate as cofactor.

It carries out the reaction isochorismate + 2-oxoglutarate + H(+) = 5-enolpyruvoyl-6-hydroxy-2-succinyl-cyclohex-3-ene-1-carboxylate + CO2. Its pathway is quinol/quinone metabolism; 1,4-dihydroxy-2-naphthoate biosynthesis; 1,4-dihydroxy-2-naphthoate from chorismate: step 2/7. It functions in the pathway quinol/quinone metabolism; menaquinone biosynthesis. Catalyzes the thiamine diphosphate-dependent decarboxylation of 2-oxoglutarate and the subsequent addition of the resulting succinic semialdehyde-thiamine pyrophosphate anion to isochorismate to yield 2-succinyl-5-enolpyruvyl-6-hydroxy-3-cyclohexene-1-carboxylate (SEPHCHC). This chain is 2-succinyl-5-enolpyruvyl-6-hydroxy-3-cyclohexene-1-carboxylate synthase, found in Serratia proteamaculans (strain 568).